A 340-amino-acid chain; its full sequence is MYKNWRDLIRPKQLQFEKESLSDTYGKFFAEPFERGFATTLGNSLRRILLSSLQGSAITSVRIKGVLHEFSAIQGVTEDVTDIILNLKGVRLKLHSVVQATIRVVHTGEGVVKAGDFVVGHNVEIMNPEHHIATCGKDAHFEMDMTVKMGKGYVSADKNRDEKAPVGTIPIDSIFSPIKKVNFTISNARVGQMTDYDKLTLEIWTDGSVKPDDALAYSAKIMKEQLSIFINFDEEAEPQAPEESQDEIDKINENLYRTVEELELSVRSANCLKNAGIKLIGELVSKTEAEMLKTQNFGRKSLNEIKDILSDMGLTFGMKLDSFPEPDMLRRLRGEQNEEE.

An alpha N-terminal domain (alpha-NTD) region spans residues 1-233 (MYKNWRDLIR…EQLSIFINFD (233 aa)). The segment at 246–340 (DEIDKINENL…RLRGEQNEEE (95 aa)) is alpha C-terminal domain (alpha-CTD).

It belongs to the RNA polymerase alpha chain family. As to quaternary structure, homodimer. The RNAP catalytic core consists of 2 alpha, 1 beta, 1 beta' and 1 omega subunit. When a sigma factor is associated with the core the holoenzyme is formed, which can initiate transcription.

It carries out the reaction RNA(n) + a ribonucleoside 5'-triphosphate = RNA(n+1) + diphosphate. Its function is as follows. DNA-dependent RNA polymerase catalyzes the transcription of DNA into RNA using the four ribonucleoside triphosphates as substrates. The chain is DNA-directed RNA polymerase subunit alpha from Pelobacter propionicus (strain DSM 2379 / NBRC 103807 / OttBd1).